The following is a 748-amino-acid chain: Malate synthase G (748 aa).

Residues Val-141, 148 to 149 (RF), Ser-298, and Arg-335 each bind acetyl-CoA. Arg-362 serves as the catalytic Proton acceptor. Glyoxylate-binding positions include Arg-362, Glu-453, and 478 to 481 (GFLD). The Mg(2+) site is built by Glu-453 and Asp-481. Pro-562 lines the acetyl-CoA pocket. Residue Cys-639 is modified to Cysteine sulfenic acid (-SOH). Residue Asp-653 is the Proton donor of the active site.

This sequence belongs to the malate synthase family. GlcB subfamily. As to quaternary structure, monomer. Mg(2+) serves as cofactor.

It localises to the cytoplasm. It catalyses the reaction glyoxylate + acetyl-CoA + H2O = (S)-malate + CoA + H(+). It participates in carbohydrate metabolism; glyoxylate cycle; (S)-malate from isocitrate: step 2/2. Functionally, involved in the glycolate utilization. Catalyzes the condensation and subsequent hydrolysis of acetyl-coenzyme A (acetyl-CoA) and glyoxylate to form malate and CoA. This chain is Malate synthase G, found in Corynebacterium efficiens (strain DSM 44549 / YS-314 / AJ 12310 / JCM 11189 / NBRC 100395).